The sequence spans 117 residues: Probable non-functional immunoglobulin heavy variable 7-81 (117 aa).

The first 19 residues, 1-19 (MDWTWSILFLVAAATGTYS), serve as a signal peptide directing secretion. A framework-1 region spans residues 20–44 (QVQLVQSGHEVKQPGASVKVSCKAS). In terms of domain architecture, Ig-like spans 20–117 (QVQLVQSGHE…EDMAMYYCAR (98 aa)). A disulfide bridge connects residues C41 and C115. The complementarity-determining-1 stretch occupies residues 45 to 52 (GYSFTTYG). The framework-2 stretch occupies residues 53–69 (MNWVPQAPGQGLEWMGW). The tract at residues 70–77 (FNTYTGNP) is complementarity-determining-2. An N-linked (GlcNAc...) asparagine glycan is attached at N76. The segment at 78-115 (TYAQGFTGRFVFSMDTSASTAYLQISSLKAEDMAMYYC) is framework-3. The segment at 116 to 117 (AR) is complementarity-determining-3.

In terms of assembly, immunoglobulins are composed of two identical heavy chains and two identical light chains; disulfide-linked.

It localises to the secreted. The protein resides in the cell membrane. Its function is as follows. Probable non-functional open reading frame (ORF) of V region of the variable domain of immunoglobulin heavy chains. Non-functional ORF generally cannot participate in the synthesis of a productive immunoglobulin chain due to altered V-(D)-J or switch recombination and/or splicing site (at mRNA level) and/or conserved amino acid change (protein level). Immunoglobulins, also known as antibodies, are membrane-bound or secreted glycoproteins produced by B lymphocytes. In the recognition phase of humoral immunity, the membrane-bound immunoglobulins serve as receptors which, upon binding of a specific antigen, trigger the clonal expansion and differentiation of B lymphocytes into immunoglobulins-secreting plasma cells. Secreted immunoglobulins mediate the effector phase of humoral immunity, which results in the elimination of bound antigens. The antigen binding site is formed by the variable domain of one heavy chain, together with that of its associated light chain. Thus, each immunoglobulin has two antigen binding sites with remarkable affinity for a particular antigen. The variable domains are assembled by a process called V-(D)-J rearrangement and can then be subjected to somatic hypermutations which, after exposure to antigen and selection, allow affinity maturation for a particular antigen. The sequence is that of Probable non-functional immunoglobulin heavy variable 7-81 from Homo sapiens (Human).